We begin with the raw amino-acid sequence, 339 residues long: Centromere protein N (339 aa).

Ser226 and Ser235 each carry phosphoserine.

It belongs to the CENP-N/CHL4 family. As to quaternary structure, component of the CENPA-NAC complex, at least composed of CENPA, CENPC, CENPH, CENPM, CENPN, CENPT and CENPU. The CENPA-NAC complex interacts with the CENPA-CAD complex, composed of CENPI, CENPK, CENPL, CENPO, CENPP, CENPQ, CENPR and CENPS. Interacts directly with CENPA. Identified in a centromere complex containing histones H2A, H2B and H4, and at least CENPA, CENPB, CENPC, CENPT, CENPN, HJURP, SUPT16H, SSRP1 and RSF1.

The protein resides in the nucleus. The protein localises to the chromosome. Its subcellular location is the centromere. It localises to the kinetochore. Component of the CENPA-NAC (nucleosome-associated) complex, a complex that plays a central role in assembly of kinetochore proteins, mitotic progression and chromosome segregation. The CENPA-NAC complex recruits the CENPA-CAD (nucleosome distal) complex and may be involved in incorporation of newly synthesized CENPA into centromeres. CENPN is the first protein to bind specifically to CENPA nucleosomes and the direct binding of CENPA nucleosomes by CENPN is required for centromere assembly. Required for chromosome congression and efficiently align the chromosomes on a metaphase plate. The protein is Centromere protein N (CENPN) of Bos taurus (Bovine).